The primary structure comprises 306 residues: uncharacterized protein (306 aa).

The protein to M.tuberculosis Rv1486c, M.bovis Mb1522c and M.leprae ML1804.

This is an uncharacterized protein from Mycobacterium avium.